The chain runs to 261 residues: MSRKPLIAGNWKMNLNHYEAIALVQKIAFSLPDKYYDRVDVAVIPPFTDLRSVQTLVDGDKLRLTYGAQDLSPHDSGAYTGDVSGAFLAKLGCSYVVVGHSERRTYHNEDDALVAAKAATALKHGLTPIVCIGEHLDVREAGNHVAHNIEQLRGSLAGLLAEQIGSVVIAYEPVWAIGTGRVASAADAQEVCAAIRKELASLASPRIADTVRVLYGGSVNAKNVGDIVAQDDVDGGLVGGASLDGEHFATLAAIAAGGPLP.

10 to 12 (NWK) provides a ligand contact to substrate. His100 serves as the catalytic Electrophile. The active-site Proton acceptor is Glu172. Substrate is bound by residues Gly178, Ser218, and 239–240 (GG).

Belongs to the triosephosphate isomerase family. As to quaternary structure, homodimer.

It is found in the cytoplasm. The catalysed reaction is D-glyceraldehyde 3-phosphate = dihydroxyacetone phosphate. Its pathway is carbohydrate biosynthesis; gluconeogenesis. It functions in the pathway carbohydrate degradation; glycolysis; D-glyceraldehyde 3-phosphate from glycerone phosphate: step 1/1. Functionally, involved in the gluconeogenesis. Catalyzes stereospecifically the conversion of dihydroxyacetone phosphate (DHAP) to D-glyceraldehyde-3-phosphate (G3P). This chain is Triosephosphate isomerase, found in Mycobacterium tuberculosis (strain CDC 1551 / Oshkosh).